Reading from the N-terminus, the 270-residue chain is Oxidoreductase NAD-binding domain-containing protein 1 (270 aa).

The region spanning 20–123 (MELFSARVCD…VGGNFYFDPQ (104 aa)) is the FAD-binding FR-type domain. NAD(+) is bound at residue 137-142 (GVGINP).

In Danio rerio (Zebrafish), this protein is Oxidoreductase NAD-binding domain-containing protein 1 (oxnad1).